A 471-amino-acid polypeptide reads, in one-letter code: Serine hydroxymethyltransferase 4 (471 aa).

Residue Met-1 is modified to N-acetylmethionine. Position 39 (Ser-39) interacts with L-serine. Positions 39, 59, and 61 each coordinate pemetrexed. Glu-61 and Tyr-69 together coordinate L-serine. Pemetrexed contacts are provided by residues 105-107 (SGS), His-134, Ser-190, and His-218. Residues His-218 and Lys-244 each coordinate L-serine. Lys-244 is subject to N6-(pyridoxal phosphate)lysine. Residue Gly-290 coordinates pemetrexed. Lys-373 is a methotrexate binding site. Arg-389 serves as a coordination point for L-serine. Arg-389 provides a ligand contact to pemetrexed.

The protein belongs to the SHMT family. Homotetramer. Interacts with UBP16. Requires pyridoxal 5'-phosphate as cofactor. Mostly expressed in flowers, less abundant in roots, inflorescence stems, and siliques, and barely detectable in leaves.

It is found in the cytoplasm. The enzyme catalyses (6R)-5,10-methylene-5,6,7,8-tetrahydrofolate + glycine + H2O = (6S)-5,6,7,8-tetrahydrofolate + L-serine. It participates in one-carbon metabolism; tetrahydrofolate interconversion. Inhibited by the antifolate drugs methotrexate and pemetrexed. Its function is as follows. Catalyzes the interconversion of serine and glycine with the conversion of tetrahydrofolate (THF) into 5,10-methylene-THF. This Arabidopsis thaliana (Mouse-ear cress) protein is Serine hydroxymethyltransferase 4.